The primary structure comprises 422 residues: Probable ornithine aminotransferase, mitochondrial (422 aa).

Lys-273 bears the N6-(pyridoxal phosphate)lysine mark.

Belongs to the class-III pyridoxal-phosphate-dependent aminotransferase family. Pyridoxal 5'-phosphate is required as a cofactor.

It localises to the mitochondrion matrix. The enzyme catalyses a 2-oxocarboxylate + L-ornithine = L-glutamate 5-semialdehyde + an L-alpha-amino acid. It functions in the pathway amino-acid biosynthesis; L-proline biosynthesis; L-glutamate 5-semialdehyde from L-ornithine: step 1/1. The chain is Probable ornithine aminotransferase, mitochondrial from Caenorhabditis elegans.